Reading from the N-terminus, the 170-residue chain is Phosphopantetheine adenylyltransferase (170 aa).

Position 10 (Thr-10) interacts with substrate. ATP is bound by residues 10–11 (TF) and His-18. Positions 42, 75, and 89 each coordinate substrate. ATP-binding positions include 90 to 92 (GVR), Glu-100, and 125 to 131 (YTYVASS).

The protein belongs to the bacterial CoaD family. Homohexamer. It depends on Mg(2+) as a cofactor.

The protein localises to the cytoplasm. It catalyses the reaction (R)-4'-phosphopantetheine + ATP + H(+) = 3'-dephospho-CoA + diphosphate. It participates in cofactor biosynthesis; coenzyme A biosynthesis; CoA from (R)-pantothenate: step 4/5. Its function is as follows. Reversibly transfers an adenylyl group from ATP to 4'-phosphopantetheine, yielding dephospho-CoA (dPCoA) and pyrophosphate. The chain is Phosphopantetheine adenylyltransferase from Chlorobium limicola (strain DSM 245 / NBRC 103803 / 6330).